The sequence spans 169 residues: Putative phosphoesterase SAR0985 (169 aa).

Residue H34 is the Proton donor of the active site. 2 consecutive short sequence motifs (HXTX) follow at residues 34 to 37 and 115 to 118; these read HVTI and HFTI. H115 functions as the Proton acceptor in the catalytic mechanism.

The protein belongs to the 2H phosphoesterase superfamily. YjcG family.

This chain is Putative phosphoesterase SAR0985, found in Staphylococcus aureus (strain MRSA252).